The sequence spans 467 residues: UDP-N-acetylmuramate--L-alanine ligase (467 aa).

ATP is bound at residue 121–127 (GSHGKTT).

The protein belongs to the MurCDEF family.

Its subcellular location is the cytoplasm. The catalysed reaction is UDP-N-acetyl-alpha-D-muramate + L-alanine + ATP = UDP-N-acetyl-alpha-D-muramoyl-L-alanine + ADP + phosphate + H(+). It functions in the pathway cell wall biogenesis; peptidoglycan biosynthesis. Its function is as follows. Cell wall formation. This is UDP-N-acetylmuramate--L-alanine ligase from Parasynechococcus marenigrum (strain WH8102).